The following is a 148-amino-acid chain: Nucleoside diphosphate kinase (148 aa).

Residues Lys9, Phe57, Arg85, Thr91, Arg102, and Asn112 each contribute to the ATP site. Catalysis depends on His115, which acts as the Pros-phosphohistidine intermediate.

The protein belongs to the NDK family. Homotetramer. It depends on Mg(2+) as a cofactor.

It localises to the cytoplasm. The catalysed reaction is a 2'-deoxyribonucleoside 5'-diphosphate + ATP = a 2'-deoxyribonucleoside 5'-triphosphate + ADP. It carries out the reaction a ribonucleoside 5'-diphosphate + ATP = a ribonucleoside 5'-triphosphate + ADP. Functionally, major role in the synthesis of nucleoside triphosphates other than ATP. The ATP gamma phosphate is transferred to the NDP beta phosphate via a ping-pong mechanism, using a phosphorylated active-site intermediate. In Macrococcus caseolyticus (strain JCSC5402) (Macrococcoides caseolyticum), this protein is Nucleoside diphosphate kinase.